The following is a 90-amino-acid chain: Conotoxin Vc22.1 (90 aa).

The signal sequence occupies residues 1–18 (MMTRVFLAMFFLLVLTKG).

The protein belongs to the E superfamily. Contains 4 disulfide bonds. In terms of tissue distribution, expressed by the venom duct.

It localises to the secreted. This Conus victoriae (Queen Victoria cone) protein is Conotoxin Vc22.1.